Reading from the N-terminus, the 914-residue chain is Sensor protein TorS (914 aa).

Residues Met1 to Arg8 are Cytoplasmic-facing. The helical transmembrane segment at Leu9 to Tyr29 threads the bilayer. Topologically, residues Asn30–Ser332 are periplasmic. The helical transmembrane segment at Leu333 to Tyr353 threads the bilayer. The 54-residue stretch at Arg354–Arg407 folds into the HAMP domain. At Arg354 to Ile914 the chain is on the cytoplasmic side. Positions Ala450–Val664 constitute a Histidine kinase domain. His453 is modified (phosphohistidine; by autocatalysis). Positions Arg683–Leu798 constitute a Response regulatory domain. Position 733 is a 4-aspartylphosphate (Asp733). The HPt domain occupies Gly821 to Ile914. His860 is subject to Phosphohistidine.

May form homomultimers. Seems to interact with TorT and TorC apocytochrome. Activation requires a sequential transfer of a phosphate group from a His in the primary transmitter domain, to an Asp in the receiver domain and to a His in the secondary transmitter domain.

Its subcellular location is the cell inner membrane. It catalyses the reaction ATP + protein L-histidine = ADP + protein N-phospho-L-histidine.. Its activity is regulated as follows. Inhibited by TorC apocytochrome. In terms of biological role, member of the two-component regulatory system TorS/TorR involved in the anaerobic utilization of trimethylamine-N-oxide (TMAO). Detects the presence of TMAO in the medium and, in response, activates TorR via a four-step phosphorelay. When TMAO is removed, TorS can dephosphorylate TorR, probably by a reverse phosphorelay involving His-860 and Asp-733. This chain is Sensor protein TorS (torS), found in Escherichia coli (strain K12).